The primary structure comprises 142 residues: Nucleoside diphosphate kinase (142 aa).

Positions 11, 59, 87, 93, 104, and 114 each coordinate ATP. Residue His-117 is the Pros-phosphohistidine intermediate of the active site.

This sequence belongs to the NDK family. Homotetramer. It depends on Mg(2+) as a cofactor.

Its subcellular location is the cytoplasm. The catalysed reaction is a 2'-deoxyribonucleoside 5'-diphosphate + ATP = a 2'-deoxyribonucleoside 5'-triphosphate + ADP. It carries out the reaction a ribonucleoside 5'-diphosphate + ATP = a ribonucleoside 5'-triphosphate + ADP. In terms of biological role, major role in the synthesis of nucleoside triphosphates other than ATP. The ATP gamma phosphate is transferred to the NDP beta phosphate via a ping-pong mechanism, using a phosphorylated active-site intermediate. The sequence is that of Nucleoside diphosphate kinase from Photobacterium profundum (strain SS9).